We begin with the raw amino-acid sequence, 524 residues long: Bifunctional purine biosynthesis protein PurH (524 aa).

Residues 1-144 (MTRRALVSVS…KNSAHVGVVV (144 aa)) enclose the MGS-like domain.

Belongs to the PurH family.

The enzyme catalyses (6R)-10-formyltetrahydrofolate + 5-amino-1-(5-phospho-beta-D-ribosyl)imidazole-4-carboxamide = 5-formamido-1-(5-phospho-D-ribosyl)imidazole-4-carboxamide + (6S)-5,6,7,8-tetrahydrofolate. It catalyses the reaction IMP + H2O = 5-formamido-1-(5-phospho-D-ribosyl)imidazole-4-carboxamide. It functions in the pathway purine metabolism; IMP biosynthesis via de novo pathway; 5-formamido-1-(5-phospho-D-ribosyl)imidazole-4-carboxamide from 5-amino-1-(5-phospho-D-ribosyl)imidazole-4-carboxamide (10-formyl THF route): step 1/1. Its pathway is purine metabolism; IMP biosynthesis via de novo pathway; IMP from 5-formamido-1-(5-phospho-D-ribosyl)imidazole-4-carboxamide: step 1/1. The protein is Bifunctional purine biosynthesis protein PurH of Anaeromyxobacter sp. (strain K).